We begin with the raw amino-acid sequence, 483 residues long: Regulatory protein ViaA (483 aa).

Belongs to the ViaA family. As to quaternary structure, homodimer. Interacts with RavA.

It is found in the cytoplasm. Component of the RavA-ViaA chaperone complex, which may act on the membrane to optimize the function of some of the respiratory chains. ViaA stimulates the ATPase activity of RavA. The protein is Regulatory protein ViaA of Salmonella dublin (strain CT_02021853).